The primary structure comprises 263 residues: Hydroxyethylthiazole kinase (263 aa).

Residue Met39 participates in substrate binding. ATP contacts are provided by Lys115 and Thr160. Residue Gly187 participates in substrate binding.

Belongs to the Thz kinase family. Requires Mg(2+) as cofactor.

It catalyses the reaction 5-(2-hydroxyethyl)-4-methylthiazole + ATP = 4-methyl-5-(2-phosphooxyethyl)-thiazole + ADP + H(+). It functions in the pathway cofactor biosynthesis; thiamine diphosphate biosynthesis; 4-methyl-5-(2-phosphoethyl)-thiazole from 5-(2-hydroxyethyl)-4-methylthiazole: step 1/1. In terms of biological role, catalyzes the phosphorylation of the hydroxyl group of 4-methyl-5-beta-hydroxyethylthiazole (THZ). The polypeptide is Hydroxyethylthiazole kinase (Staphylococcus saprophyticus subsp. saprophyticus (strain ATCC 15305 / DSM 20229 / NCIMB 8711 / NCTC 7292 / S-41)).